We begin with the raw amino-acid sequence, 56 residues long: uncharacterized protein (56 aa).

This is an uncharacterized protein from Saccharolobus islandicus (Sulfolobus islandicus).